We begin with the raw amino-acid sequence, 62 residues long: Sperm protamine P1 (62 aa).

The tract at residues methionine 1–tyrosine 62 is disordered.

Belongs to the protamine P1 family. In terms of tissue distribution, testis.

The protein resides in the nucleus. The protein localises to the chromosome. Functionally, protamines substitute for histones in the chromatin of sperm during the haploid phase of spermatogenesis. They compact sperm DNA into a highly condensed, stable and inactive complex. This Thylogale stigmatica (Red-legged pademelon) protein is Sperm protamine P1 (PRM1).